Consider the following 581-residue polypeptide: Trehalase (581 aa).

Belongs to the glycosyl hydrolase 15 family. As to quaternary structure, monomer.

It catalyses the reaction alpha,alpha-trehalose + H2O = alpha-D-glucose + beta-D-glucose. It participates in glycan degradation; trehalose degradation; D-glucose from alpha,alpha-trehalose: step 1/1. Its activity is regulated as follows. Inhibited by validamycin A. In terms of biological role, catalyzes the hydrolysis of alpha,alpha-trehalose into two molecules of D-glucose. The sequence is that of Trehalase from Thermoplasma acidophilum (strain ATCC 25905 / DSM 1728 / JCM 9062 / NBRC 15155 / AMRC-C165).